The following is a 571-amino-acid chain: Urease subunit alpha (571 aa).

The Urease domain maps to 133–571 (AGIDTHIHFI…VALNQRYFFS (439 aa)). His-138, His-140, and Lys-221 together coordinate Ni(2+). Lys-221 bears the N6-carboxylysine mark. A substrate-binding site is contributed by His-223. Residues His-250 and His-276 each coordinate Ni(2+). Residue His-324 is the Proton donor of the active site. Asp-364 contributes to the Ni(2+) binding site.

Belongs to the metallo-dependent hydrolases superfamily. Urease alpha subunit family. In terms of assembly, heterotrimer of UreA (gamma), UreB (beta) and UreC (alpha) subunits. Three heterotrimers associate to form the active enzyme. Ni cation serves as cofactor. Post-translationally, carboxylation allows a single lysine to coordinate two nickel ions.

The protein resides in the cytoplasm. It catalyses the reaction urea + 2 H2O + H(+) = hydrogencarbonate + 2 NH4(+). It participates in nitrogen metabolism; urea degradation; CO(2) and NH(3) from urea (urease route): step 1/1. This chain is Urease subunit alpha, found in Photorhabdus laumondii subsp. laumondii (strain DSM 15139 / CIP 105565 / TT01) (Photorhabdus luminescens subsp. laumondii).